Consider the following 176-residue polypeptide: Large ribosomal subunit protein uL6 (176 aa).

Belongs to the universal ribosomal protein uL6 family. Part of the 50S ribosomal subunit.

Its function is as follows. This protein binds to the 23S rRNA, and is important in its secondary structure. It is located near the subunit interface in the base of the L7/L12 stalk, and near the tRNA binding site of the peptidyltransferase center. The sequence is that of Large ribosomal subunit protein uL6 from Dechloromonas aromatica (strain RCB).